Consider the following 337-residue polypeptide: S-adenosylmethionine:tRNA ribosyltransferase-isomerase (337 aa).

The protein belongs to the QueA family. In terms of assembly, monomer.

The protein localises to the cytoplasm. The catalysed reaction is 7-aminomethyl-7-carbaguanosine(34) in tRNA + S-adenosyl-L-methionine = epoxyqueuosine(34) in tRNA + adenine + L-methionine + 2 H(+). The protein operates within tRNA modification; tRNA-queuosine biosynthesis. Transfers and isomerizes the ribose moiety from AdoMet to the 7-aminomethyl group of 7-deazaguanine (preQ1-tRNA) to give epoxyqueuosine (oQ-tRNA). This Legionella pneumophila (strain Lens) protein is S-adenosylmethionine:tRNA ribosyltransferase-isomerase.